A 976-amino-acid polypeptide reads, in one-letter code: Vacuolar membrane protease (976 aa).

Topologically, residues methionine 1 to lysine 15 are cytoplasmic. The chain crosses the membrane as a helical span at residues threonine 16–aspartate 36. The Vacuolar portion of the chain corresponds to histidine 37–leucine 359. Residues asparagine 96 and asparagine 121 are each glycosylated (N-linked (GlcNAc...) asparagine). Histidine 156 and aspartate 168 together coordinate Zn(2+). Asparagine 189 carries N-linked (GlcNAc...) asparagine glycosylation. Glutamate 200 (proton acceptor) is an active-site residue. Glutamate 201 provides a ligand contact to Zn(2+). N-linked (GlcNAc...) asparagine glycans are attached at residues asparagine 212 and asparagine 217. Zn(2+)-binding residues include glutamate 226 and histidine 300. The helical transmembrane segment at phenylalanine 360–isoleucine 380 threads the bilayer. The Cytoplasmic portion of the chain corresponds to serine 381–tryptophan 392. Residues leucine 393 to phenylalanine 412 traverse the membrane as a helical segment. Topologically, residues serine 413 to tyrosine 428 are vacuolar. The chain crosses the membrane as a helical span at residues phenylalanine 429–cysteine 449. Residues serine 450–serine 461 are Cytoplasmic-facing. A helical transmembrane segment spans residues leucine 462 to leucine 482. Over tyrosine 483 to serine 496 the chain is Vacuolar. The chain crosses the membrane as a helical span at residues isoleucine 497–methionine 517. The Cytoplasmic segment spans residues arginine 518 to tyrosine 627. The segment at arginine 528–glutamate 610 is disordered. Residues asparagine 549–threonine 558 show a composition bias toward polar residues. A compositionally biased stretch (low complexity) spans serine 559–aspartate 570. A compositionally biased stretch (basic and acidic residues) spans asparagine 582–proline 601. Residues alanine 628–valine 648 traverse the membrane as a helical segment. The Vacuolar segment spans residues aspartate 649–aspartate 668. Asparagine 656 is a glycosylation site (N-linked (GlcNAc...) asparagine). The chain crosses the membrane as a helical span at residues valine 669–tyrosine 689. Topologically, residues lysine 690–asparagine 692 are cytoplasmic. The helical transmembrane segment at tyrosine 693–valine 713 threads the bilayer. At histidine 714 to leucine 976 the chain is on the vacuolar side. 5 N-linked (GlcNAc...) asparagine glycosylation sites follow: asparagine 768, asparagine 796, asparagine 811, asparagine 866, and asparagine 937.

Belongs to the peptidase M28 family. It depends on Zn(2+) as a cofactor.

Its subcellular location is the vacuole membrane. Functionally, may be involved in vacuolar sorting and osmoregulation. The sequence is that of Vacuolar membrane protease from Saccharomyces cerevisiae (strain RM11-1a) (Baker's yeast).